The primary structure comprises 32 residues: Coenzyme PQQ synthesis protein A (32 aa).

The pyrroloquinoline quinone (Glu-Tyr) cross-link spans 16-20 (EINMY).

The protein belongs to the PqqA family.

Its pathway is cofactor biosynthesis; pyrroloquinoline quinone biosynthesis. Functionally, required for coenzyme pyrroloquinoline quinone (PQQ) biosynthesis. PQQ is probably formed by cross-linking a specific glutamate to a specific tyrosine residue and excising these residues from the peptide. The polypeptide is Coenzyme PQQ synthesis protein A (Dinoroseobacter shibae (strain DSM 16493 / NCIMB 14021 / DFL 12)).